Here is a 124-residue protein sequence, read N- to C-terminus: Small ribosomal subunit protein bS6 (124 aa).

Residues 97-124 (TGPSPMMKEVQREEAKKAAAAQPTEAQA) form a disordered region. Positions 114–124 (AAAAQPTEAQA) are enriched in low complexity.

The protein belongs to the bacterial ribosomal protein bS6 family.

Functionally, binds together with bS18 to 16S ribosomal RNA. This is Small ribosomal subunit protein bS6 from Paraburkholderia phymatum (strain DSM 17167 / CIP 108236 / LMG 21445 / STM815) (Burkholderia phymatum).